A 238-amino-acid chain; its full sequence is MRPAGRSANQVRPVTLTRNYTKHAEGSVLVEFGDTKVLCTASIEEGVPRFLKGQGQGWITAEYGMLPRATHTRNAREAAKGKQGGRTMEIQRLIARALRAAVDLKTLGEFTITLDCDVIQADGGTRTASITGACVALADALNKLVANGKLKTNPMKGMVAAVSVGIVNGEAICDLEYVEDSAAETDMNVVMTEDGRIIEVQGTAEGEPFSHEELLTLLSLARGGIESIVATQKAALEN.

Residues arginine 86 and 124–126 (GTR) each bind phosphate.

This sequence belongs to the RNase PH family. Homohexameric ring arranged as a trimer of dimers.

The catalysed reaction is tRNA(n+1) + phosphate = tRNA(n) + a ribonucleoside 5'-diphosphate. Functionally, phosphorolytic 3'-5' exoribonuclease that plays an important role in tRNA 3'-end maturation. Removes nucleotide residues following the 3'-CCA terminus of tRNAs; can also add nucleotides to the ends of RNA molecules by using nucleoside diphosphates as substrates, but this may not be physiologically important. Probably plays a role in initiation of 16S rRNA degradation (leading to ribosome degradation) during starvation. This chain is Ribonuclease PH, found in Salmonella gallinarum (strain 287/91 / NCTC 13346).